The primary structure comprises 340 residues: MKPGGPIGVVGAGSWGTTLAQVIADKGFEVDLWVFEPELCKTIRETRQNDLYLPGVVLSGRINAHNDLDRVVKNHDLLIMVVPSHVYRNVATAMIPFLKPDAVVVNATKGIENDTLLTMSGIWREVLPPGLQVRVLCLSGPSFAREVARKVPTAVTLAGDELQTAKAVQHVISTGYFRIYTSLDKIGVEIAGASKNVIALAAGVSDGMSFGYNSRAALITRGLAEITRLGVKMGSNPLTFLGLAGIGDLLLTCTGDLSRNRTVGIQLGQGRRIKDILAEMRMVAEGVKTAKSIHFLARRIGVEMPICEQVYRVIYEDKDPRVVVRELMERDLKHELELGH.

Positions 14, 15, and 109 each coordinate NADPH. Sn-glycerol 3-phosphate contacts are provided by Lys109, Gly140, and Ser142. Ala144 provides a ligand contact to NADPH. Sn-glycerol 3-phosphate contacts are provided by Lys195, Asp248, Ser258, Arg259, and Asn260. Residue Lys195 is the Proton acceptor of the active site. Arg259 provides a ligand contact to NADPH. Residues Val283 and Glu285 each contribute to the NADPH site.

It belongs to the NAD-dependent glycerol-3-phosphate dehydrogenase family.

Its subcellular location is the cytoplasm. It carries out the reaction sn-glycerol 3-phosphate + NAD(+) = dihydroxyacetone phosphate + NADH + H(+). The enzyme catalyses sn-glycerol 3-phosphate + NADP(+) = dihydroxyacetone phosphate + NADPH + H(+). It participates in membrane lipid metabolism; glycerophospholipid metabolism. In terms of biological role, catalyzes the reduction of the glycolytic intermediate dihydroxyacetone phosphate (DHAP) to sn-glycerol 3-phosphate (G3P), the key precursor for phospholipid synthesis. The polypeptide is Glycerol-3-phosphate dehydrogenase [NAD(P)+] (Syntrophobacter fumaroxidans (strain DSM 10017 / MPOB)).